The following is a 555-amino-acid chain: Glutamine--tRNA ligase (555 aa).

The short motif at 34–44 (PEPNGYLHIGH) is the 'HIGH' region element. ATP contacts are provided by residues 35 to 37 (EPN) and 41 to 47 (HIGHAKS). Residues Asp67 and Tyr212 each coordinate L-glutamine. Residues Thr231, 261 to 262 (RL), and 269 to 271 (MSK) each bind ATP. The short motif at 268–272 (IMSKR) is the 'KMSKS' region element.

The protein belongs to the class-I aminoacyl-tRNA synthetase family. Monomer.

The protein resides in the cytoplasm. The catalysed reaction is tRNA(Gln) + L-glutamine + ATP = L-glutaminyl-tRNA(Gln) + AMP + diphosphate. The sequence is that of Glutamine--tRNA ligase from Yersinia pseudotuberculosis serotype O:1b (strain IP 31758).